We begin with the raw amino-acid sequence, 491 residues long: Probable protein phosphatase 2C 52 (491 aa).

Basic and acidic residues predominate over residues 1-11 (MVYDGAVKDQE). Positions 1-211 (MVYDGAVKDQ…REREKERERV (211 aa)) are disordered. The segment covering 12 to 54 (SSANPASASAALSEASAAASEVTAAAAAGAGAGAAEEGAAVSG) has biased composition (low complexity). Residues 66-78 (GVRHPLKHRRFRA) are compositionally biased toward basic residues. Residues 95-105 (VADEEASEVEQ) show a composition bias toward acidic residues. Residues 187–211 (VEEKKHKDQENKHKEREREKERERV) show a composition bias toward basic and acidic residues. A PPM-type phosphatase domain is found at 229–475 (SCGYSSFRGK…DNITCIVVKF (247 aa)). Positions 265, 266, 427, and 466 each coordinate Mn(2+).

It belongs to the PP2C family. Mg(2+) is required as a cofactor. Mn(2+) serves as cofactor.

It catalyses the reaction O-phospho-L-seryl-[protein] + H2O = L-seryl-[protein] + phosphate. The catalysed reaction is O-phospho-L-threonyl-[protein] + H2O = L-threonyl-[protein] + phosphate. The chain is Probable protein phosphatase 2C 52 from Oryza sativa subsp. japonica (Rice).